The chain runs to 22 residues: Alpha-amylase inhibitor DR4 (22 aa).

The disordered stretch occupies residues 1 to 22 (SGGGKEAAETFNRVESHPRPDA).

Functionally, inhibits insect alpha-amylases. In Delonix regia (Royal poinciana), this protein is Alpha-amylase inhibitor DR4.